A 125-amino-acid chain; its full sequence is MORF4 family-associated protein 1 (125 aa).

Positions 76-99 are disordered; it reads ESALNHLQGAGGAEPRGPRAEKAD. Positions 94–124 form a coiled coil; it reads RAEKADEKAQEMAKMAEMLVQLVRRIEKSES.

The protein belongs to the MORF4 family-associated protein family. In terms of assembly, found in a complex composed of MORF4L1, MRFAP1 and RB1. Interacts via its N-terminus with MORF4L1. Interacts with CSTB and MORF4L2. As to expression, widely expressed in all tissues examined and as early as 7 days during embryonic development.

Its subcellular location is the nucleus. It localises to the cytoplasm. The protein localises to the perinuclear region. In Mus musculus (Mouse), this protein is MORF4 family-associated protein 1.